We begin with the raw amino-acid sequence, 371 residues long: Lysine racemase (371 aa).

The Proton acceptor role is filled by K39. K39 carries the N6-(pyridoxal phosphate)lysine modification. Substrate is bound at residue R135. Residue Y266 is the Proton acceptor of the active site. Position 313 (M313) interacts with substrate.

This sequence belongs to the alanine racemase family. In terms of assembly, homodimer. It depends on pyridoxal 5'-phosphate as a cofactor.

It catalyses the reaction L-lysine = D-lysine. In terms of biological role, catalyzes the interconversion of D-lysine and L-lysine. Can also use arginine and ornithine, but not alanine. This is Lysine racemase from Oenococcus oeni (strain ATCC BAA-331 / PSU-1).